Reading from the N-terminus, the 400-residue chain is ASTRA-associated protein 1 (400 aa).

WD repeat units lie at residues 6 to 54, 57 to 94, 240 to 272, and 273 to 312; these read SAPQ…PKLQ, AHKD…FEMP, EYQN…KVVI, and HSDP…KGEI.

This sequence belongs to the WD repeat ASA1 family. As to quaternary structure, component of the ASTRA chromatin remodeling machinery complex.

The protein localises to the nucleus. Its function is as follows. Component of the ASTRA complex involved in chromatin remodeling. This Lodderomyces elongisporus (strain ATCC 11503 / CBS 2605 / JCM 1781 / NBRC 1676 / NRRL YB-4239) (Yeast) protein is ASTRA-associated protein 1 (ASA1).